The sequence spans 346 residues: Homeobox protein ceh-22 (346 aa).

Disordered stretches follow at residues 1–68 and 135–190; these read MFNV…QSAL and LPDQ…RKKR. A compositionally biased stretch (low complexity) spans 9–24; sequence AATPSIASVSSVASPS. Polar residues predominate over residues 25-44; that stretch reads EQHGLSTSVGVGVNDTTSRT. Residues 49–67 are compositionally biased toward low complexity; that stretch reads AASSASSASAAPQQQSQSA. The segment covering 147-156 has biased composition (polar residues); that stretch reads LDNSNTSNGN. Residues 166–182 show a composition bias toward acidic residues; that stretch reads EDEDEILEDEENDEEDD. Residues 189 to 248 constitute a DNA-binding region (homeobox); it reads KRKRRVLFTKAQTYELERRFRSQKYLSAPEREALAMQIRLTPTQVKIWFQNHRYKTKKSH.

It belongs to the NK-2 homeobox family.

Its subcellular location is the nucleus. Its function is as follows. Involved in combinatorial activation of gene expression in pharyngeal muscle. Specifically binds a site necessary for activity of the B subelement of myo-2 enhancer. In terms of biological role, regulates distal tip cell fate. The protein is Homeobox protein ceh-22 (ceh-22) of Caenorhabditis elegans.